We begin with the raw amino-acid sequence, 527 residues long: Optineurin (527 aa).

Disordered regions lie at residues M1 to L32 and S101 to L143. Positions E38–S170 form a coiled coil. The interaction with Rab8 stretch occupies residues M58–R209. Positions D176–I181 match the LIR motif. S177 carries the post-translational modification Phosphoserine; by TBK1. Over residues G186–H197 the composition is skewed to basic and acidic residues. Disordered stretches follow at residues G186 to Y214 and S262 to L292. At S198 the chain carries Phosphoserine. Residues P201–A210 show a composition bias toward polar residues. A coiled-coil region spans residues C239–D458. 2 stretches are compositionally biased toward basic and acidic residues: residues S262–I274 and S281–L292. Residues T361–I527 are interaction with HD. The segment at R362–R470 is interaction with MYO6. The UBAN motif lies at D424–R429. Residue S476 is modified to Phosphoserine. The segment at Q497–I527 adopts a CCHC NOA-type zinc-finger fold. The Zn(2+) site is built by C505, C508, H521, and C525.

Self-associates. Interacts with HD. Interacts with GTF3A. Interacts with MYO6. Interacts (via UBAN) with ubiquitinated TFRC. Interacts with GTP-bound Rab8 (RAB8A and/or RAB8B). Interacts with TBC1D17. Interacts with TBK1. Interacts with TRAF3. Binds to linear ubiquitin chains. Interacts with LC3 family members MAP1LC3A, MAP1LC3B, GABARAP, GABARAPL1 and GABARAPL2; OPTN phosphorylation increases the association (at least with MAP1LC3B). Interacts with RAB12; the interaction may be indirect. Interacts with TBK1; this interaction leads to the Golgi localization of TBK1 and its subsequent activation. Interacts with palmitoyltransferase ZDHHC17/HIP14; the interaction does not lead to palmitoylation of OPTN. Interacts with CYLD. Interacts with TOM1; the interaction is indirect and is mediated by MYO6, which acts as a bridge between TOM1 and OPTN. Interacts with USP12; the interaction is independent of USP12 deubiquitinase activity and may be involved in regulation of autophagic flux. In terms of processing, phosphorylated by TBK1, leading to restrict bacterial proliferation in case of infection.

The protein localises to the cytoplasm. It localises to the perinuclear region. It is found in the golgi apparatus. The protein resides in the trans-Golgi network. Its subcellular location is the cytoplasmic vesicle. The protein localises to the autophagosome. It localises to the recycling endosome. Plays an important role in the maintenance of the Golgi complex, in membrane trafficking, in exocytosis, through its interaction with myosin VI and Rab8. Links myosin VI to the Golgi complex and plays an important role in Golgi ribbon formation. Negatively regulates the induction of IFNB in response to RNA virus infection. Plays a neuroprotective role in the eye and optic nerve. Probably part of the TNF-alpha signaling pathway that can shift the equilibrium toward induction of cell death. May act by regulating membrane trafficking and cellular morphogenesis via a complex that contains Rab8 and huntingtin (HD). Mediates the interaction of Rab8 with the probable GTPase-activating protein TBC1D17 during Rab8-mediated endocytic trafficking, such as that of transferrin receptor (TFRC/TfR); regulates Rab8 recruitment to tubules emanating from the endocytic recycling compartment. Autophagy receptor that interacts directly with both the cargo to become degraded and an autophagy modifier of the MAP1 LC3 family; targets ubiquitin-coated bacteria (xenophagy) and appears to function in the same pathway as SQSTM1 and CALCOCO2/NDP52. The polypeptide is Optineurin (OPTN) (Pongo abelii (Sumatran orangutan)).